The following is a 763-amino-acid chain: Translation initiation factor IF-2 (763 aa).

Positions 52–178 (KQKKVQTSQN…KDEAIKHETK (127 aa)) are disordered. The segment covering 65–82 (SNDENKKITNKNTEKTTE) has biased composition (basic and acidic residues). Polar residues predominate over residues 86–96 (TVDSNKQNNSN). Composition is skewed to basic and acidic residues over residues 105-116 (RNNDEESVSHFD) and 123-135 (KSEM…LNDK). Basic residues predominate over residues 136–145 (KKNKNFKNTK). A compositionally biased stretch (low complexity) spans 146–161 (NKNSNNNKNSKNNKNN). The segment covering 162 to 178 (KNNDHNRKDEAIKHETK) has biased composition (basic and acidic residues). One can recognise a tr-type G domain in the interval 265–434 (ERPPVITVMG…LMVAEMEELK (170 aa)). The G1 stretch occupies residues 274–281 (GHVDHGKT). Position 274 to 281 (274 to 281 (GHVDHGKT)) interacts with GTP. The interval 299 to 303 (GITQH) is G2. Residues 320–323 (DTPG) form a G3 region. GTP contacts are provided by residues 320 to 324 (DTPGH) and 374 to 377 (NKID). Residues 374–377 (NKID) form a G4 region. The tract at residues 410 to 412 (SAR) is G5.

Belongs to the TRAFAC class translation factor GTPase superfamily. Classic translation factor GTPase family. IF-2 subfamily.

The protein localises to the cytoplasm. Functionally, one of the essential components for the initiation of protein synthesis. Protects formylmethionyl-tRNA from spontaneous hydrolysis and promotes its binding to the 30S ribosomal subunits. Also involved in the hydrolysis of GTP during the formation of the 70S ribosomal complex. In Finegoldia magna (strain ATCC 29328 / DSM 20472 / WAL 2508) (Peptostreptococcus magnus), this protein is Translation initiation factor IF-2.